The primary structure comprises 232 residues: MLGAMFRAGTPMPPNLNSQGGGHYFIDRDGKAFRHILNFLRLGRLDLPRGYGETALLRAEADFYQIRPLLDALRELEASQGTPAPTAALLHADVDVSPRLVHFSARRGPHHYELSSVQVDTFRANLFCTDSECLGALRARFGVASGDRAEGSPHFHLEWAPRPVELPEVEYGRLGLQPLWTGGPGERREVVGTPSFLEEVLRVALEHGFRLDSVFPDPEDLLNSRSLRFVRH.

One can recognise a BTB domain in the interval Met1–Arg49.

In terms of assembly, homopentamer. Interacts with KCTD6 and KCTD21; KCTD11 and KCTD6 or KCTD21 may associate in pentameric assemblies. Component of the BCR(KCTD11) E3 ubiquitin ligase complex, at least composed of CUL3 and KCTD11 and RBX1. Interacts (via BTB domain) with CUL3; initially a 4:4 stoichiometry has been reported, however, electron microscopy revealed pentameric states of the BTB domain. As to expression, higher expression in cerebellum than in whole brain and lower expression in medulloblastoma.

The protein operates within protein modification; protein ubiquitination. Its function is as follows. Plays a role as a marker and a regulator of neuronal differentiation; Up-regulated by a variety of neurogenic signals, such as retinoic acid, epidermal growth factor/EGF and NGFB/nerve growth factor. Induces apoptosis, growth arrest and the expression of cyclin-dependent kinase inhibitor CDKN1B. Plays a role as a tumor repressor and inhibits cell growth and tumorigenicity of medulloblastoma (MDB). Acts as a probable substrate-specific adapter for a BCR (BTB-CUL3-RBX1) E3 ubiquitin-protein ligase complex towards HDAC1. Functions as antagonist of the Hedgehog pathway on cell proliferation and differentiation by affecting the nuclear transfer of transcription factor GLI1, thus maintaining cerebellar granule cells in undifferentiated state, this effect probably occurs via HDAC1 down-regulation, keeping GLI1 acetylated and inactive. When knock-down, Hedgehog antagonism is impaired and proliferation of granule cells is sustained. Activates the caspase cascade. In Homo sapiens (Human), this protein is BTB/POZ domain-containing protein KCTD11 (KCTD11).